Consider the following 385-residue polypeptide: m7GpppN-mRNA hydrolase (385 aa).

Residues 95–226 (MGVPTYGAII…KLGLAPNKFF (132 aa)) enclose the Nudix hydrolase domain. A Nudix box motif is present at residues 129–150 (GKVNKEEAPHDCAAREVFEETG). 2 residues coordinate Mn(2+): Glu144 and Glu148. Ser246, Ser247, Ser249, Ser276, and Ser284 each carry phosphoserine. The interval 247–266 (SDSDNGFSSTGSTPAKPTVE) is disordered. Low complexity predominate over residues 249–259 (SDNGFSSTGST).

This sequence belongs to the Nudix hydrolase family. DCP2 subfamily. As to quaternary structure, found in a mRNA decay complex with LSM1, LSM3, LSM4, EXOSC2, EXOSC4, EXOSC10, PARN, XRN1, CNOT6, UPF1, UPF2 and UPF3B. Forms a complex with DCP1A, EDC3, DDX6 and EDC4/HEDLS, within this complex directly interacts with EDC4/HEDLS. Interacts with DPC1B, UPF1, UPF2 and UPF3B. Associates with polysomes. Interacts (via N-terminus and C-terminus) with TRIM21 (via N-terminus and C-terminus). Interacts with LIMD1, WTIP and AJUBA. Interacts with DDX17 in an RNA-dependent manner. Interacts with ZC3HAV1. Interacts with APOBEC3G in an RNA-dependent manner. Interacts with ZFP36L1 (via N-terminus). Interacts with NBDY. It depends on Mn(2+) as a cofactor. Requires Mg(2+) as cofactor.

The protein resides in the cytoplasm. The protein localises to the P-body. It localises to the nucleus. It carries out the reaction a 5'-end (N(7)-methyl 5'-triphosphoguanosine)-ribonucleoside in mRNA + H2O = N(7)-methyl-GDP + a 5'-end phospho-ribonucleoside in mRNA + 2 H(+). In terms of biological role, decapping metalloenzyme that catalyzes the cleavage of the cap structure on mRNAs. Removes the 7-methyl guanine cap structure from mRNA molecules, yielding a 5'-phosphorylated mRNA fragment and 7m-GDP. Necessary for the degradation of mRNAs, both in normal mRNA turnover and in nonsense-mediated mRNA decay. Plays a role in replication-dependent histone mRNA degradation. Has higher activity towards mRNAs that lack a poly(A) tail. Has no activity towards a cap structure lacking an RNA moiety. The presence of a N(6)-methyladenosine methylation at the second transcribed position of mRNAs (N(6),2'-O-dimethyladenosine cap; m6A(m)) provides resistance to DCP2-mediated decapping. Blocks autophagy in nutrient-rich conditions by repressing the expression of ATG-related genes through degradation of their transcripts. In Pongo abelii (Sumatran orangutan), this protein is m7GpppN-mRNA hydrolase (DCP2).